We begin with the raw amino-acid sequence, 1090 residues long: MSVWNYVVTAHKPTSVTHSCVGNFTGPNQLNLIVAKCTRIEIHLLTPQGLQPMIDVPIYGRIATLELFRPHNETQDFLFIATERYKFCVLQWDGEKSELLTRAMGDVSDRIGRPTDNGQIGIIDPDCRLIGLHLYDGLFKVIPFDNKGQLKEAFNIRLEELQVLDIKFLYGCVKPTIVVLYQDNKDARHVKTYEVALKDKDFVEGPWSQNNLDNGAGLLIPVPAPLGGVIIIGEETIVYCNANSTFRAIPIKQSIIRAYGRVDPDGSRYLLGDNAGILHLLVLTHERERVTGLKIEYLGETSIASSISYLDNGVVYVGSRFGDSQLVKLNLQADPNGSYVEVLERYVNLGPIVDFCVVDLDRQGQGQVVTCSGAFKDGSLRVVRNGIGINEQASVELQGIKGLWSLKSSFNDPYDMYLVVSFISETRFLAMNMEDELEETEIEGFDAQTQTLFCQNAINDLLIQVTANSVRLVSCTSRELVDQWNAPEGFSVNVASANASQVLLATGGGHLVYLEIKDSKLVEVKHIQLEHEISCVDLNPIGENPQYSSLAAVGMWTDISVRILSLPDLELIRKENLGGEIVPRSVLLCTLEGVSYLLCALGDGHLFSFLLNASTGELTDRKKVSLGTQPISLRTFSSKGTTHVFASSDRPTVIYSSNKKLLYSNVNLKEVNHMCPFNTAAIPDSLAIAKEGELSIGTIDDIQKLHIRTIPLNEQARRICHQEQSRTLAFCSFKHNQTSIEESETHFVRLLDHQTFEFLSIYQLDQYEHGCSIISCSFSDDNNVYYCVGTAYVLPEENEPSKGRILVFAVEDGRLQLIVEKETKGAVYSLNAFNGKLLAAINQKIQLYKWMLREDGSHELQSECGHHGHILALYTQTRGDFIVVGDLMKSISLLVYKHEESAIEELARDYNANWMSAVEMLDDEIYIGAENNYNIFTVRKNSDAATDEERGRLEVVGEYHLGEFVNRLRHGSLVMRLPDSEMGQIPTVIFGTINGVIGIIASLPHEQYVFLEKLQSTLVKFIKGVGNLSHEQWRSFHNDKKTSEARNFLDGDLIESFLDLSRNKMEEVAKGMGVPVEELSKRVEELTRLH.

This sequence belongs to the DDB1 family. As to quaternary structure, component of the UV-DDB complex, which is composed of DDB1 and DDB2. In terms of tissue distribution, expressed in proliferating tissues. Highly expressed in shoot apical meristem (SAM). Expressed in roots, young leaves, flag leaves, and panicles. Not detected in mature leaves.

The protein resides in the nucleus. In terms of biological role, required for DNA repair. Binds to DDB2 to form the UV-damaged DNA-binding protein complex (the UV-DDB complex). The UV-DDB complex may recognize UV-induced DNA damage and recruit proteins of the nucleotide excision repair pathway (the NER pathway) to initiate DNA repair. May function as the substrate recognition module for a DCX (DDB1-CUL4-X-box) E3 ubiquitin-protein ligase complex. The protein is DNA damage-binding protein 1 of Oryza sativa subsp. japonica (Rice).